We begin with the raw amino-acid sequence, 97 residues long: CRISPR-associated endoribonuclease Cas2 1 (97 aa).

Asp-12 contributes to the Mg(2+) binding site.

The protein belongs to the CRISPR-associated endoribonuclease Cas2 protein family. Homodimer, forms a heterotetramer with a Cas1 homodimer. Requires Mg(2+) as cofactor.

Functionally, CRISPR (clustered regularly interspaced short palindromic repeat) is an adaptive immune system that provides protection against mobile genetic elements (viruses, transposable elements and conjugative plasmids). CRISPR clusters contain sequences complementary to antecedent mobile elements and target invading nucleic acids. CRISPR clusters are transcribed and processed into CRISPR RNA (crRNA). Functions as a ssRNA-specific endoribonuclease. Involved in the integration of spacer DNA into the CRISPR cassette. The sequence is that of CRISPR-associated endoribonuclease Cas2 1 from Francisella tularensis subsp. novicida (strain U112).